A 306-amino-acid chain; its full sequence is MKSVGHFVPWLTDIRHLTDGTISEVFVGERKNSKKLYVIKVQGLVFKRPPHDAMRGKLILESIGHPHIERIVDSFIDNEAGSVYLITSFKSFVLSDVMDEISIDTKCKIVLQISSALEYLEKHGILHRDIHPNNILLDSMNGPAYLSDFSIAWSKQHPGEEVQELIPQIGTGHYRAIETLFGCHSYGHEVDRWTFGILIAELFSNQALFDDGSSEGWPSELRLTSSIIQTLGTPNPSMWPELSTFPDWNKFIFHEYPPKPWSEILPSVDTSIQYIVSHLVTYSNRASPSFVIESFPKVSARLSQYA.

The region spanning 11–306 (LTDIRHLTDG…KVSARLSQYA (296 aa)) is the Protein kinase domain. ATP contacts are provided by residues 17–25 (LTDGTISEV) and lysine 40. Residue aspartate 129 is the Proton acceptor of the active site.

Belongs to the protein kinase superfamily. CMGC Ser/Thr protein kinase family. CDC2/CDKX subfamily.

The enzyme catalyses L-seryl-[protein] + ATP = O-phospho-L-seryl-[protein] + ADP + H(+). The catalysed reaction is L-threonyl-[protein] + ATP = O-phospho-L-threonyl-[protein] + ADP + H(+). Its function is as follows. Acts as a CAK-activating kinase that specifically activates crk1 of the crk1-mcs2 CAK complex. In Schizosaccharomyces pombe (strain 972 / ATCC 24843) (Fission yeast), this protein is Serine/threonine-protein kinase csk1 (csk1).